The following is a 743-amino-acid chain: Polyribonucleotide nucleotidyltransferase (743 aa).

Residues Asp-489 and Asp-495 each coordinate Mg(2+). Positions 556–618 constitute a KH domain; sequence PRIEKMHIGK…PCIDAAIGMI (63 aa). The 71-residue stretch at 628-698 folds into the S1 motif domain; the sequence is GETYPGKITS…KTGKFKLSRK (71 aa). Residues 704 to 743 are disordered; it reads PEGYVEPQPRERRERREGGREGGRNFERRGGDRDHREPRG.

It belongs to the polyribonucleotide nucleotidyltransferase family. It depends on Mg(2+) as a cofactor.

It is found in the cytoplasm. The enzyme catalyses RNA(n+1) + phosphate = RNA(n) + a ribonucleoside 5'-diphosphate. In terms of biological role, involved in mRNA degradation. Catalyzes the phosphorolysis of single-stranded polyribonucleotides processively in the 3'- to 5'-direction. The protein is Polyribonucleotide nucleotidyltransferase of Porphyromonas gingivalis (strain ATCC BAA-308 / W83).